Here is a 320-residue protein sequence, read N- to C-terminus: Aspartate carbamoyltransferase catalytic subunit (320 aa).

Carbamoyl phosphate is bound by residues arginine 70 and threonine 71. Lysine 98 contacts L-aspartate. Arginine 120, histidine 150, and glutamine 153 together coordinate carbamoyl phosphate. Residues arginine 184 and arginine 239 each coordinate L-aspartate. Residues glycine 280 and proline 281 each coordinate carbamoyl phosphate.

The protein belongs to the aspartate/ornithine carbamoyltransferase superfamily. ATCase family. In terms of assembly, heterododecamer (2C3:3R2) of six catalytic PyrB chains organized as two trimers (C3), and six regulatory PyrI chains organized as three dimers (R2).

The enzyme catalyses carbamoyl phosphate + L-aspartate = N-carbamoyl-L-aspartate + phosphate + H(+). It participates in pyrimidine metabolism; UMP biosynthesis via de novo pathway; (S)-dihydroorotate from bicarbonate: step 2/3. Catalyzes the condensation of carbamoyl phosphate and aspartate to form carbamoyl aspartate and inorganic phosphate, the committed step in the de novo pyrimidine nucleotide biosynthesis pathway. This Xylella fastidiosa (strain Temecula1 / ATCC 700964) protein is Aspartate carbamoyltransferase catalytic subunit.